Reading from the N-terminus, the 192-residue chain is MGKGCKVVVCGMASVGKTAILEQLLYGSHTVGAETSDTQEDIYVASVETDRGVREQLRLYDTRGLREGLDLPKHFFSVADGFVLVYSVDCLESFKKVEVLKKEIDRSRDKKEVMVMVLGNKCELRERRQVDQDTAQQWARGEKVKLWEVTVTDRSTLIEPFTSLTSRLTQPQSKSAFPLPGRKSKGTPSNDI.

The segment at 1 to 192 (MGKGCKVVVC…KSKGTPSNDI (192 aa)) is small GTPase-like. GTP is bound at residue 11 to 18 (GMASVGKT). The Effector region motif lies at 35–43 (TSDTQEDIY). Residues 61-65 (DTRGL) and 120-123 (NKCE) each bind GTP. The disordered stretch occupies residues 169 to 192 (TQPQSKSAFPLPGRKSKGTPSNDI).

Belongs to the small GTPase superfamily. Ras family. KappaB-Ras subfamily.

The protein resides in the cytoplasm. Atypical Ras-like protein that acts as a potent regulator of NF-kappa-B activity by preventing the degradation of NF-kappa-B inhibitor beta (NFKBIB) by most signals, explaining why NFKBIB is more resistant to degradation. This chain is NF-kappa-B inhibitor-interacting Ras-like protein 1 (nkiras1), found in Danio rerio (Zebrafish).